Consider the following 97-residue polypeptide: Large ribosomal subunit protein bL28 (97 aa).

It belongs to the bacterial ribosomal protein bL28 family.

The protein is Large ribosomal subunit protein bL28 of Rickettsia bellii (strain OSU 85-389).